Reading from the N-terminus, the 573-residue chain is MRTENTATLNLMWGALILEELARLGVQHVCMAPGSRSTPLTLAAAQQTKLKRHLHFDERGLGFMALGLAKASCAPVAIITTSGTAVANLYPAIVEAWLTHVPLIVLSGDRPPELLGCGANQAIVQPAIFANYAQQVNLPTPDAHIAPQMLLTTLDEAVANQTRPVHINCMYREPLYPSEMSGTILDSESPYLRPLQTWLQHAKPYTQYGKSEQLSSPSDDAIMRFVHGKGVIIAGTLTPEQDPQQLIALSQKIGWPLLTDAQSQLRQHPAAIGNIDQLLQHPKARNLLQEADRVLVFGGRLLSKRLIAYLAEQNWHSYWQVLPQQDRLDPSHNAKHIWHANAAQFAQLNWYRSSSANWANTLVTYNDELHSLFVRNIDQGEFGEAQVIRAIANTRPLEQQLFIGNSLPVRLYDMYAPVSCCTATTYTNRGASGIDGLLATACGIAAHQGKPTSLIIGDLSQLHDLNSFAIARSLTSPLVIIILNNDGGNIFNLLPVPNEELRSDYYRLSHGLEFGYAAAMFNLPYNQVDNLADFQSCYHEALDYQGASVIEVSVSQHQASEQIAALNLWVKQS.

This sequence belongs to the TPP enzyme family. MenD subfamily. As to quaternary structure, homodimer. The cofactor is Mg(2+). Mn(2+) is required as a cofactor. Requires thiamine diphosphate as cofactor.

It carries out the reaction isochorismate + 2-oxoglutarate + H(+) = 5-enolpyruvoyl-6-hydroxy-2-succinyl-cyclohex-3-ene-1-carboxylate + CO2. Its pathway is quinol/quinone metabolism; 1,4-dihydroxy-2-naphthoate biosynthesis; 1,4-dihydroxy-2-naphthoate from chorismate: step 2/7. It participates in quinol/quinone metabolism; menaquinone biosynthesis. Catalyzes the thiamine diphosphate-dependent decarboxylation of 2-oxoglutarate and the subsequent addition of the resulting succinic semialdehyde-thiamine pyrophosphate anion to isochorismate to yield 2-succinyl-5-enolpyruvyl-6-hydroxy-3-cyclohexene-1-carboxylate (SEPHCHC). In Shewanella sp. (strain ANA-3), this protein is 2-succinyl-5-enolpyruvyl-6-hydroxy-3-cyclohexene-1-carboxylate synthase.